The following is a 303-amino-acid chain: Mitochondrial substrate carrier family protein E (303 aa).

The Mitochondrial intermembrane segment spans residues 1-8 (MENKKESS). Solcar repeat units follow at residues 6–93 (ESSL…SKQW), 104–197 (ESTI…CKST), and 210–298 (LPIP…LKYL). Residues 9–29 (LLYILTGATSGLLADSIMHPV) traverse the membrane as a helical segment. Over 30–67 (DTVRARVQIEKVGKSQYKGTFNALNQIIKNEGVSYLYK) the chain is Mitochondrial matrix. Residues 68-88 (GFPIVATATVPAHALYFLGYE) traverse the membrane as a helical segment. Residues 89 to 109 (YSKQWVTDRYGKKWGESTITH) lie on the Mitochondrial intermembrane side of the membrane. Residues 110–130 (FSAGFVADALGSLIWVPMDII) form a helical membrane-spanning segment. At 131-171 (KQRLQVQTNTQKLNPNQTYYKGSFHAGKIILQEEGIRGLYR) the chain is on the mitochondrial matrix side. The helical transmembrane segment at 172-192 (GFMPALATYGPFVGIYFSVYE) threads the bilayer. At 193-215 (KCKSTISSLLSKEKDQYLPIPYQ) the chain is on the mitochondrial intermembrane side. Residues 216-236 (LGSGFFAGAFAAAVTCPLDVI) form a helical membrane-spanning segment. The Mitochondrial matrix portion of the chain corresponds to 237-268 (KTRIQVQRSTEKQIYKGMWDSFKTILKEEGPK). A helical membrane pass occupies residues 269-289 (AFVKGMGARIWWIAPGNALTI). Residues 290–303 (ASYEQLKYLFKDLI) are Mitochondrial intermembrane-facing.

This sequence belongs to the mitochondrial carrier (TC 2.A.29) family.

The protein localises to the mitochondrion inner membrane. Its function is as follows. Mitochondrial solute carriers shuttle metabolites, nucleotides, and cofactors through the mitochondrial inner membrane. The chain is Mitochondrial substrate carrier family protein E (mcfE) from Dictyostelium discoideum (Social amoeba).